Here is a 233-residue protein sequence, read N- to C-terminus: Lipoprotein-releasing system ATP-binding protein LolD (233 aa).

The ABC transporter domain occupies 6–233 (LQCDNLCKRY…TAELSLMGAE (228 aa)). Residue 42–49 (GSSGSGKS) coordinates ATP.

It belongs to the ABC transporter superfamily. Lipoprotein translocase (TC 3.A.1.125) family. The complex is composed of two ATP-binding proteins (LolD) and two transmembrane proteins (LolC and LolE).

The protein localises to the cell inner membrane. In terms of biological role, part of the ABC transporter complex LolCDE involved in the translocation of mature outer membrane-directed lipoproteins, from the inner membrane to the periplasmic chaperone, LolA. Responsible for the formation of the LolA-lipoprotein complex in an ATP-dependent manner. This Shigella boydii serotype 4 (strain Sb227) protein is Lipoprotein-releasing system ATP-binding protein LolD.